A 210-amino-acid polypeptide reads, in one-letter code: UPF0173 protein PF0020 (210 aa).

It belongs to the UPF0173 family.

The sequence is that of UPF0173 protein PF0020 from Pyrococcus furiosus (strain ATCC 43587 / DSM 3638 / JCM 8422 / Vc1).